The following is a 459-amino-acid chain: Cysteine--tRNA ligase (459 aa).

Cysteine 27 lines the Zn(2+) pocket. The 'HIGH' region signature appears at valine 29 to histidine 39. Cysteine 208, histidine 233, and glutamate 237 together coordinate Zn(2+). Positions lysine 265–serine 269 match the 'KMSKS' region motif. Lysine 268 lines the ATP pocket.

Belongs to the class-I aminoacyl-tRNA synthetase family. Monomer. The cofactor is Zn(2+).

The protein localises to the cytoplasm. The enzyme catalyses tRNA(Cys) + L-cysteine + ATP = L-cysteinyl-tRNA(Cys) + AMP + diphosphate. This is Cysteine--tRNA ligase from Francisella tularensis subsp. novicida (strain U112).